The chain runs to 271 residues: Orotidine 5'-phosphate decarboxylase (271 aa).

The Proton donor role is filled by Lys-95.

Belongs to the OMP decarboxylase family. Type 2 subfamily.

It carries out the reaction orotidine 5'-phosphate + H(+) = UMP + CO2. The protein operates within pyrimidine metabolism; UMP biosynthesis via de novo pathway; UMP from orotate: step 2/2. In Janthinobacterium sp. (strain Marseille) (Minibacterium massiliensis), this protein is Orotidine 5'-phosphate decarboxylase.